The primary structure comprises 377 residues: GDP-mannose 3,5-epimerase (377 aa).

Position 2 is an N-acetylglycine (glycine 2). NAD(+) contacts are provided by residues glycine 34–lysine 60, aspartate 58, and aspartate 78. Substrate-binding positions include glycine 103 and serine 143–cysteine 145. Residues tyrosine 174 and lysine 178 each contribute to the NAD(+) site. Tyrosine 174 functions as the Proton acceptor in the catalytic mechanism. Substrate contacts are provided by residues asparagine 203, glutamate 216 to alanine 218, lysine 225, glutamine 241 to arginine 243, arginine 306, and serine 356. Position 369 is a phosphoserine (serine 369).

The protein belongs to the NAD(P)-dependent epimerase/dehydratase family. In terms of assembly, homodimer. Interacts with chaperone Hsc70-3 protein, which may regulate epimerase activity. Requires NAD(+) as cofactor.

The catalysed reaction is GDP-alpha-D-mannose = GDP-beta-L-gulose. It catalyses the reaction GDP-beta-L-gulose = GDP-beta-L-galactose. Its pathway is cofactor biosynthesis; L-ascorbate biosynthesis via GDP-alpha-D-mannose pathway; L-ascorbate from GDP-alpha-D-mannose: step 1/5. Its activity is regulated as follows. Inhibited by GDP and GDP-D-glucose. In terms of biological role, catalyzes a reversible epimerization of GDP-D-mannose that precedes the committed step in the biosynthesis of vitamin C (L-ascorbate), resulting in the hydrolysis of the highly energetic glycosyl-pyrophosphoryl linkage. Able to catalyze 2 distinct epimerization reactions and can release both GDP-L-galactose and GDP-L-gulose from GDP-mannose. The protein is GDP-mannose 3,5-epimerase of Arabidopsis thaliana (Mouse-ear cress).